Here is a 178-residue protein sequence, read N- to C-terminus: Protein-export protein SecB (178 aa).

Residues Met1–Met13 are compositionally biased toward acidic residues. A disordered region spans residues Met1 to Arg25.

This sequence belongs to the SecB family. As to quaternary structure, homotetramer, a dimer of dimers. One homotetramer interacts with 1 SecA dimer.

It localises to the cytoplasm. In terms of biological role, one of the proteins required for the normal export of preproteins out of the cell cytoplasm. It is a molecular chaperone that binds to a subset of precursor proteins, maintaining them in a translocation-competent state. It also specifically binds to its receptor SecA. This chain is Protein-export protein SecB, found in Erythrobacter litoralis (strain HTCC2594).